Consider the following 1016-residue polypeptide: KN motif and ankyrin repeat domain-containing protein 4 (1016 aa).

Disordered stretches follow at residues 1 to 26, 70 to 91, 235 to 259, 401 to 485, 506 to 563, and 622 to 755; these read MEKI…YPYS, PRNF…QQNW, AEPE…AVQS, LSQE…LPRG, EEGS…SPQD, and AQAP…VSHL. Polar residues-rich tracts occupy residues 70–80 and 246–258; these read PRNFSLPNSGD and SHLS…SAVQ. Positions 346–409 form a coiled coil; it reads SSLKNQVLAL…KLSQERASEA (64 aa). Composition is skewed to basic and acidic residues over residues 401–414 and 445–454; these read LSQE…DRTD and PECRAPRAEK. Polar residues predominate over residues 460-469; the sequence is VQNNHKQSYP. Positions 632–650 are enriched in pro residues; it reads TPAPPPSTPPPPPPPPPEI. At Thr639 the chain carries Phosphothreonine. Over residues 695–708 the composition is skewed to acidic residues; it reads TSGEDSSPEDLSDS. Basic and acidic residues-rich tracts occupy residues 709-727 and 745-755; these read ETEK…DLHP and TSDRGEEVSHL. ANK repeat units follow at residues 838-868, 877-905, 910-939, 943-973, and 977-1007; these read SGNT…NVDH, VMIT…NVNI, GGQT…DVNL, DGSS…NSSL, and AGRT…PGRS.

The protein localises to the cytoplasm. May be involved in the control of cytoskeleton formation by regulating actin polymerization. The sequence is that of KN motif and ankyrin repeat domain-containing protein 4 (Kank4) from Mus musculus (Mouse).